The primary structure comprises 1051 residues: Helicase POLQ-like (1051 aa).

Over residues 1–10 (MANKHNLCKK) the composition is skewed to basic residues. Disordered regions lie at residues 1–28 (MANKHNLCKKRSLDLSEESTSESHAKRQ) and 61–112 (LFGT…APTD). Composition is skewed to polar residues over residues 64–78 (TQATTSTNKMTQSGS) and 89–102 (SFPSAQSVPPNSAS). The span at 103–112 (KPDEASAPTD) shows a compositional bias: basic and acidic residues. One can recognise a Helicase ATP-binding domain in the interval 274 to 446 (LPAIRQRKNL…FLNADVYTRG (173 aa)). 287–294 (LPTSGGKT) lines the ATP pocket. The DEAH box signature appears at 391–394 (DELH). The Helicase C-terminal domain maps to 497-689 (HLAGLISECA…NEAVGLQSLI (193 aa)).

It belongs to the helicase family. SKI2 subfamily.

It is found in the nucleus. The protein localises to the chromosome. The enzyme catalyses Couples ATP hydrolysis with the unwinding of duplex DNA by translocating in the 3'-5' direction.. It carries out the reaction ATP + H2O = ADP + phosphate + H(+). Its function is as follows. Single-stranded 3'-5' DNA helicase that plays a key role in homology-driven double-strand break (DSB) repair. Involved in different DSB repair mechanisms that are guided by annealing of extensive stretches of complementary bases at break ends, such as microhomology-mediated end-joining (MMEJ), single-strand annealing (SSA) or synthesis-dependent strand annealing (SDSA). The sequence is that of Helicase POLQ-like from Drosophila melanogaster (Fruit fly).